The sequence spans 199 residues: Recombination protein RecR (199 aa).

A C4-type zinc finger spans residues 57-72; it reads CSVCGNLTDDDPCNIC. Positions 80–176 constitute a Toprim domain; sequence STVLVVEDSK…TVTRLARGLA (97 aa).

The protein belongs to the RecR family.

Functionally, may play a role in DNA repair. It seems to be involved in an RecBC-independent recombinational process of DNA repair. It may act with RecF and RecO. The polypeptide is Recombination protein RecR (Streptococcus mutans serotype c (strain ATCC 700610 / UA159)).